Here is a 594-residue protein sequence, read N- to C-terminus: Type IV inositol polyphosphate 5-phosphatase 7 (594 aa).

The disordered stretch occupies residues 246–300 (FRCGHRPSDYSRRPSDYSRPSDYYSRPSNYSRPSDVSRWGSSDDDNGPGDSPSTF). The segment covering 251–261 (RPSDYSRRPSD) has biased composition (basic and acidic residues). The segment covering 262 to 279 (YSRPSDYYSRPSNYSRPS) has biased composition (low complexity). Catalytic regions lie at residues 435–450 (DRVI…IALS) and 515–530 (KRRT…WHGE).

The protein belongs to the inositol polyphosphate 5-phosphatase family. In terms of tissue distribution, broadly expressed in emerging organs. Mostly localized in procambium of growing organs. Restricted to vascular differentiating cells of young organs.

Its subcellular location is the nucleus. The protein resides in the cell membrane. The enzyme catalyses a 1,2-diacyl-sn-glycero-3-phospho-(1D-myo-inositol-4,5-bisphosphate) + H2O = a 1,2-diacyl-sn-glycero-3-phospho-(1D-myo-inositol 4-phosphate) + phosphate. The catalysed reaction is a 1,2-diacyl-sn-glycero-3-phospho-(1D-myo-inositol-3,4,5-trisphosphate) + H2O = a 1,2-diacyl-sn-glycero-3-phospho-(1D-myo-inositol-3,4-bisphosphate) + phosphate. Has phosphatase activity toward PtdIns(4,5)P2 and at a lower extent toward PtdIns(3,4,5)P3 but not toward Ins(1,4,5)P3. Acts redundantly with CVP2 for maintaining vascular continuity. Regulates phosphoinositide-dependent VAN3 localization. Functions in salt stress response by regulating reactive oxygen species (ROS) production and stress-responsive genes expression. The polypeptide is Type IV inositol polyphosphate 5-phosphatase 7 (Arabidopsis thaliana (Mouse-ear cress)).